A 626-amino-acid chain; its full sequence is MSDAQDSRVGSMFGPYHLKRLLGRGGMGEVYEAEHTVKEWTVAVKLMTAEFSKDPVFRERMKREARIAGRLQEPHVVPIHDYGEVDGQMFLEMRLVEGTDLDSVLKRFGPLTPPRAVAIITQIASALDAAHADGVMHRDVKPQNILITRDDFAYLVDFGIASATTDEKLTQLGTAVGTWKYMAPERFSNDEVTYRADIYALACVLHECLTGAPPYRADSAGTLVSSHLMGPIPQPSAIRPGIPKAFDAVVARGMAKKPEDRYASAGDLALAAHEALSDPDQDHAADILRRSQESTLPAPPKPVPPPTMPATAMAPRQPPAPPVTPPGVQPAPKPSYTPPAQPGPAGQRPGPTGQPSWAPNSGPMPASGPTPTPQYYQGGGWGAPPSGGPSPWAQTPRKTNPWPLVAGAAAVVLVLVLGAIGIWIAIRPKPVQPPQPVAEERLSALLLNSSEVNAVMGSSSMQPGKPITSMDSSPVTVSLPDCQGALYTSQDPVYAGTGYTAINGLISSEPGDNYEHWVNQAVVAFPTADKARAFVQTSADKWKNCAGKTVTVTNKAKTYRWTFADVKGSPPTITVIDTQEGAEGWECQRAMSVANNVVVDVNACGYRITNQAGQIAAKIVDKVNKE.

Residues 1–403 (MSDAQDSRVG…QTPRKTNPWP (403 aa)) are Cytoplasmic-facing. In terms of domain architecture, Protein kinase spans 16 to 276 (YHLKRLLGRG…DLALAAHEAL (261 aa)). ATP is bound by residues 22-30 (LGRGGMGEV) and K45. D139 serves as the catalytic Proton acceptor. Position 170 is a phosphothreonine (T170). A disordered region spans residues 292 to 396 (QESTLPAPPK…GGPSPWAQTP (105 aa)). Pro residues-rich tracts occupy residues 297 to 308 (PAPPKPVPPPTM) and 316 to 342 (RQPP…PAQP). Residues 343–355 (GPAGQRPGPTGQP) show a composition bias toward low complexity. Residues 404–424 (LVAGAAAVVLVLVLGAIGIWI) traverse the membrane as a helical segment. Residues 425–626 (AIRPKPVQPP…AKIVDKVNKE (202 aa)) are Extracellular-facing. 2 disulfides stabilise this stretch: C482–C545 and C587–C604.

Belongs to the protein kinase superfamily. Ser/Thr protein kinase family. Requires a divalent metal cation as cofactor. Autophosphorylated on threonine and serine residues. Dephosphorylated by PstP.

It localises to the cell membrane. The catalysed reaction is L-seryl-[protein] + ATP = O-phospho-L-seryl-[protein] + ADP + H(+). It catalyses the reaction L-threonyl-[protein] + ATP = O-phospho-L-threonyl-[protein] + ADP + H(+). Inhibited by the kinase inhibitors staurosporine and H-7. May regulate bacterial growth in response to external signals to facilitate adaptation to the host environment. In vitro, phosphorylates several substrates such as EmbR, DevR (DosR), DacB1 and Rv0681. This Mycobacterium tuberculosis (strain ATCC 25618 / H37Rv) protein is Serine/threonine-protein kinase PknH (pknH).